The chain runs to 458 residues: Mannan endo-1,6-alpha-mannosidase DFG5 (458 aa).

The first 26 residues, M1–A26, serve as a signal peptide directing secretion. N-linked (GlcNAc...) asparagine glycosylation is found at N89, N114, N138, N208, N231, N245, N270, N273, and N417. The tract at residues P399–S418 is disordered. G437 carries the GPI-anchor amidated glycine lipid modification. Residues A438 to F458 constitute a propeptide, removed in mature form.

The protein belongs to the glycosyl hydrolase 76 family. N-glycosylated.

Its subcellular location is the cell membrane. It catalyses the reaction Random hydrolysis of (1-&gt;6)-alpha-D-mannosidic linkages in unbranched (1-&gt;6)-mannans.. Functionally, required for normal synthesis of the cell wall. The sequence is that of Mannan endo-1,6-alpha-mannosidase DFG5 (DFG5) from Saccharomyces cerevisiae (strain ATCC 204508 / S288c) (Baker's yeast).